Consider the following 263-residue polypeptide: MKRQGFQFKQFFIEHQDCAMKVGTDSIMLGSWVTGGDLINASETQRFLDIGTGSGLLAIMLAQKSSEQTHISGIDIDKDAIGQATRNMANSPWSHRLDAQQASVQSFTQNCDNPKFALIISNPPYFNSPILTHEKQAQKRVAARQTSELTHHTLLNNVVRLLAPSGVFYCVLPSDVSQAFIELADPLGLSLIKQLTVFSKPDTNALRELLAFRFNDPSCIRDTISRALTSPEPPTRDTLTIYTQSHQYSDQYKALCKDYYLNF.

This sequence belongs to the methyltransferase superfamily. tRNA (adenine-N(6)-)-methyltransferase family.

It localises to the cytoplasm. The catalysed reaction is adenosine(37) in tRNA1(Val) + S-adenosyl-L-methionine = N(6)-methyladenosine(37) in tRNA1(Val) + S-adenosyl-L-homocysteine + H(+). Specifically methylates the adenine in position 37 of tRNA(1)(Val) (anticodon cmo5UAC). This Pseudoalteromonas atlantica (strain T6c / ATCC BAA-1087) protein is tRNA1(Val) (adenine(37)-N6)-methyltransferase.